Reading from the N-terminus, the 200-residue chain is CASP-like protein 1U2 (200 aa).

Topologically, residues 1 to 33 (MAEPVIVVPRKGVYSDDSYHHHHRHHSFHSCTN) are cytoplasmic. The helical transmembrane segment at 34-54 (FLLRTLTAGATAAAVVVMLIS) threads the bilayer. Over 55–77 (TQTSGTIYGYFRGRWRDYPAYKW) the chain is Extracellular. Residues 78 to 98 (LIIANAVVFVYSVMAAIVACF) traverse the membrane as a helical segment. The Cytoplasmic portion of the chain corresponds to 99–120 (SVIARRGPLSYSPSAWLTLLVD). A helical membrane pass occupies residues 121-141 (FLAASALISAASAALAVALLA). Topologically, residues 142 to 168 (RNGQDLQGTHYWPTVCNYVSKFCDYTQ) are extracellular. Residues 169–189 (GAIIASFVGFGLLFLSTLLAA) form a helical membrane-spanning segment. At 190-200 (SALYHLSHRRH) the chain is on the cytoplasmic side.

This sequence belongs to the Casparian strip membrane proteins (CASP) family. As to quaternary structure, homodimer and heterodimers.

It is found in the cell membrane. This Physcomitrium patens (Spreading-leaved earth moss) protein is CASP-like protein 1U2.